Here is a 141-residue protein sequence, read N- to C-terminus: Ribonuclease VapC38 (141 aa).

Residues Asp-5 and Asp-102 each contribute to the Mg(2+) site.

Belongs to the PINc/VapC protein family. Mg(2+) is required as a cofactor.

It is found in the secreted. Functionally, toxic component of a type II toxin-antitoxin (TA) system. An RNase. Its cognate antitoxin is VapB38. This Mycobacterium tuberculosis (strain ATCC 25618 / H37Rv) protein is Ribonuclease VapC38.